Reading from the N-terminus, the 1648-residue chain is AT-rich interactive domain-containing protein arid-1 (1648 aa).

2 disordered regions span residues 150–270 (ISEA…PVIN) and 284–307 (RKLEKQAMKREKQRLKEEEREEKL). Composition is skewed to acidic residues over residues 166 to 193 (DDDENDEEDQEDGENEEDADDDDDDTEE), 219 to 228 (TQSEESSADS), and 251 to 260 (SDEEDQEDLA). The span at 261–270 (TTDSENPVIN) shows a compositional bias: polar residues. An ARID domain is found at 655 to 745 (AETKDLFVAM…FLESYLAINT (91 aa)). Disordered regions lie at residues 763–935 (VLPG…KEDT), 1095–1563 (SEKR…KPHD), and 1628–1648 (KTASSAAAAQASSSTCSTPRP). A compositionally biased stretch (acidic residues) spans 848-860 (SDDVTDVPDDMTD). Composition is skewed to basic and acidic residues over residues 861-878 (HEDLLPEAATRKKYERKS) and 925-935 (SEGRGPRKEDT). Acidic residues-rich tracts occupy residues 1102–1112 (DDDESSDSDTD) and 1145–1154 (GDEEAEEEVK). Positions 1165–1185 (QESPPTTSQGTTTPETAATGG) are enriched in low complexity. The segment covering 1195 to 1208 (YPPVPEELVPPPPV) has biased composition (pro residues). Over residues 1213–1251 (FPSTDRFSSGGSSNYPTLSRQGSINSMASPMFSPNSDLS) the composition is skewed to polar residues. Residues 1313–1326 (RASERSIDSASEHH) are compositionally biased toward basic and acidic residues. Polar residues predominate over residues 1348 to 1357 (ISTTQPTDTS). Over residues 1377 to 1392 (ASPTLLTSGPLTLSSS) the composition is skewed to low complexity. Over residues 1393 to 1404 (APPPPPASPAPP) the composition is skewed to pro residues. Low complexity-rich tracts occupy residues 1474-1486 (STTTTDTITPKSI) and 1531-1541 (TPTTMTTSTPT). A compositionally biased stretch (polar residues) spans 1542 to 1551 (RADSFQTQKN).

The protein resides in the nucleus. DNA-binding protein which modulates activity of several transcription factors. Plays a role in the modulation of endoplasmic reticulum (ER) homeostasis during chemical and pathogen stress, including exposure to the Gram-negative bacterium P.aeruginosa. This Caenorhabditis elegans protein is AT-rich interactive domain-containing protein arid-1.